The sequence spans 411 residues: 2-acylphloroglucinol 4-prenyltransferase, chloroplastic (411 aa).

The transit peptide at 1–91 (MELSSVSSFS…CNDQRGNSIR (91 aa)) directs the protein to the chloroplast. 8 consecutive transmembrane segments (helical) span residues 159-179 (LLGM…NQIF), 198-218 (ISVE…FILI), 226-246 (LLTS…VPPF), 253-273 (ITAF…VYYA), 278-298 (LGLA…ITFM), 333-353 (LLGT…AIIW), 356-376 (AFKS…LIFQ), and 391-411 (KSFY…YLFI).

The protein belongs to the UbiA prenyltransferase family. It depends on Mg(2+) as a cofactor. As to expression, expressed in glandular trichomes called lupulin glands, and in early stage and mature cones. Detected in leaves, but not in root, stem and first stage of flowers. No expression in male flowers.

It localises to the plastid. The protein localises to the chloroplast membrane. The enzyme catalyses a 2-acylphloroglucinol + dimethylallyl diphosphate = a 2-acyl-4-prenylphloroglucinol + diphosphate. The protein operates within secondary metabolite biosynthesis. Functionally, involved in the biosynthesis of prenylated phenolics natural products which contribute to the bitter taste of beer and display broad biological activities. Catalyzes the first prenylation step in the beta-bitter acid pathway. Abble to transfer dimethylallyl diphosphate (DMAPP) or geranyl diphosphate (GPP) to phlorisovalerophenone (PIVP), phlorisobutrylphenone (PIMP) and naringenin chalcone. Can also use phlorisobutyrophenone (PIBP) and phlormethylbutanophenone (PMBP) as substrates, but not 6'-O-methylated chalcone or naringenin. The sequence is that of 2-acylphloroglucinol 4-prenyltransferase, chloroplastic from Humulus lupulus (European hop).